Consider the following 485-residue polypeptide: dTDP-4-amino-4,6-dideoxy-D-glucose ammonia-lyase (485 aa).

[4Fe-4S] cluster contacts are provided by Cys-141, Cys-145, and Cys-148.

The protein belongs to the radical SAM superfamily. DesII family. Monomer. [4Fe-4S] cluster is required as a cofactor.

The catalysed reaction is dTDP-4-amino-4,6-dideoxy-alpha-D-glucose + AH2 + S-adenosyl-L-methionine = dTDP-3-dehydro-4,6-dideoxy-alpha-D-glucose + 5'-deoxyadenosine + L-methionine + A + NH4(+) + H(+). In terms of biological role, involved in the biosynthesis of dTDP-alpha-D-desosamine, a sugar found in several bacterial macrolide antibiotics. Catalyzes the SAM-dependent deamination of dTDP-4-amino-4,6-deoxyglucose (dTDP-viosamine) to yield dTDP-3-keto-4,6-deoxyglucose. It can also catalyze the oxidative dehydrogenation of the non-physiological substrate dTDP-D-quinovose to dTDP-3-keto-6-deoxy-d-glucose. It can also deaminate dTDP-3-amino-3,6-deoxyglucose. The sequence is that of dTDP-4-amino-4,6-dideoxy-D-glucose ammonia-lyase from Streptomyces venezuelae.